We begin with the raw amino-acid sequence, 333 residues long: Ornithine carbamoyltransferase (333 aa).

Carbamoyl phosphate is bound by residues Ser-57–Thr-60, Arg-108, and His-135–Gln-138. Residues Asn-168, Asp-232, and Ser-236 to Met-237 contribute to the L-ornithine site. Residues Cys-274–Leu-275 and Arg-319 each bind carbamoyl phosphate.

The protein belongs to the aspartate/ornithine carbamoyltransferase superfamily. OTCase family.

The protein resides in the cytoplasm. The catalysed reaction is carbamoyl phosphate + L-ornithine = L-citrulline + phosphate + H(+). It functions in the pathway amino-acid degradation; L-arginine degradation via ADI pathway; carbamoyl phosphate from L-arginine: step 2/2. Functionally, reversibly catalyzes the transfer of the carbamoyl group from carbamoyl phosphate (CP) to the N(epsilon) atom of ornithine (ORN) to produce L-citrulline. This is Ornithine carbamoyltransferase from Pediococcus pentosaceus (strain ATCC 25745 / CCUG 21536 / LMG 10740 / 183-1w).